The chain runs to 899 residues: Core protein VP3 (899 aa).

Residues 1–22 are disordered; sequence MAEPPDAATPKTSPYLKGDELS.

This sequence belongs to the orbivirus VP3 family.

It localises to the virion. Functionally, the VP3 protein is one of the five proteins (with VP1, VP4, VP6 and VP7) which form the inner capsid of the virus. This Antilocapra americana (Pronghorn) protein is Core protein VP3 (Segment-3).